The following is a 508-amino-acid chain: MADVEVRKEKKKKKIKEEPLDGDDIGTLQKQGNFQIKPSSKIAELDTSQWPLLLKNFDKLNIRSNHYTPLAHGSSPLNRDIKEYMKTGFINLDKPSNPSSHEVVAWIKKILKVEKTGHSGTLDPKVTGCLIVCIDRATRLVKSQQSAGKEYVAIFKLHGAVESVAKVRQGLEKLRGALFQRPPLISAVKRQLRVRTVYDSKLLDYDETRNMGVFWVSCEAGSYIRTMCVHLGLVLGVGGQMLELRRVRSGIQSERDGMVTMHDVLDAMWLYENHKDESMLRRVIKPLEGLLVNHKRIIMKDSSVNAVCYGAKITLPGVLRYEDGIEIDQEIVICTTKGEAICLAIALMTTATMASCDHGVVAKIKRVIMERDTYPRKWGLGPKASAKKALIAAGKLDKFGRPNENTPKEWLTGYVDYNAKKPAAQEVSPTNGSSEPSKRKLSTSSVEETAAAAVSEETPSKDKKKKKKKHKGDEEAPEAAEEEAEPVEKEKKKKKKKDKDRDRDEAQE.

The segment at 1–29 (MADVEVRKEKKKKKIKEEPLDGDDIGTLQ) is disordered. Asp123 serves as the catalytic Nucleophile. The PUA domain occupies 294–369 (HKRIIMKDSS…VVAKIKRVIM (76 aa)). The tract at residues 423 to 508 (AAQEVSPTNG…KDRDRDEAQE (86 aa)) is disordered. Ser442 is modified (phosphoserine). The segment covering 442–457 (STSSVEETAAAAVSEE) has biased composition (low complexity). Position 443 is a phosphothreonine (Thr443). Residues Ser444 and Ser445 each carry the phosphoserine modification. Thr449 is subject to Phosphothreonine. Ser455 carries the post-translational modification Phosphoserine. Thr458 is subject to Phosphothreonine. The span at 475–485 (EAPEAAEEEAE) shows a compositional bias: acidic residues. The span at 499 to 508 (KDRDRDEAQE) shows a compositional bias: basic and acidic residues.

Belongs to the pseudouridine synthase TruB family. As to quaternary structure, component of the box H/ACA small nucleolar ribonucleoprotein (H/ACA snoRNP) complex consisting of Nop60B, Gar1, NPH2 and Nop10, and associated with H/ACA-type snoRNAs. In terms of tissue distribution, expressed at higher levels in females than in males. As to expression, expressed almost exclusively in females with high levels of expression in the ovary.

Its subcellular location is the nucleus. It localises to the nucleolus. The enzyme catalyses a uridine in RNA = a pseudouridine in RNA. In terms of biological role, catalytic subunit of the box H/ACA small nucleolar ribonucleoprotein (H/ACA snoRNP) complex, which catalyzes pseudouridylation of rRNA. This involves the isomerization of uridine such that the ribose is subsequently attached to C5, instead of the normal N1. Pseudouridine ('psi') residues may serve to stabilize the conformation of rRNAs. Required for ribosome biogenesis; plays a central role in ribosomal RNA processing. H/ACA snoRNP complex-dependent ribosome biogenesis is important in female germline cell differentiation during oogenesis. Essential for viability and female fertility. Required for maintenance of the germline stem cell lineage during spermatogenesis. The protein is H/ACA ribonucleoprotein complex subunit 4 of Drosophila melanogaster (Fruit fly).